The chain runs to 425 residues: Glutamyl-tRNA reductase (425 aa).

Residues 49–52 (TCNR), S107, 112–114 (EPQ), and Q118 contribute to the substrate site. The active-site Nucleophile is C50. 187 to 192 (GAGETI) serves as a coordination point for NADP(+).

The protein belongs to the glutamyl-tRNA reductase family. In terms of assembly, homodimer.

The catalysed reaction is (S)-4-amino-5-oxopentanoate + tRNA(Glu) + NADP(+) = L-glutamyl-tRNA(Glu) + NADPH + H(+). It participates in porphyrin-containing compound metabolism; protoporphyrin-IX biosynthesis; 5-aminolevulinate from L-glutamyl-tRNA(Glu): step 1/2. Catalyzes the NADPH-dependent reduction of glutamyl-tRNA(Glu) to glutamate 1-semialdehyde (GSA). This chain is Glutamyl-tRNA reductase, found in Pseudomonas putida (strain GB-1).